We begin with the raw amino-acid sequence, 445 residues long: tRNA-2-methylthio-N(6)-dimethylallyladenosine synthase (445 aa).

The region spanning 3-124 is the MTTase N-terminal domain; that stretch reads KKLYIKTYGC…LPELISKVVR (122 aa). Residues Cys12, Cys48, Cys87, Cys162, Cys166, and Cys169 each contribute to the [4Fe-4S] cluster site. A Radical SAM core domain is found at 148 to 380; that stretch reads YTQGASSFIS…QKELATQQLA (233 aa). Positions 383–445 constitute a TRAM domain; sequence ESCVGSTMKV…ALNSLTGEIL (63 aa).

It belongs to the methylthiotransferase family. MiaB subfamily. In terms of assembly, monomer. It depends on [4Fe-4S] cluster as a cofactor.

The protein resides in the cytoplasm. The catalysed reaction is N(6)-dimethylallyladenosine(37) in tRNA + (sulfur carrier)-SH + AH2 + 2 S-adenosyl-L-methionine = 2-methylsulfanyl-N(6)-dimethylallyladenosine(37) in tRNA + (sulfur carrier)-H + 5'-deoxyadenosine + L-methionine + A + S-adenosyl-L-homocysteine + 2 H(+). Functionally, catalyzes the methylthiolation of N6-(dimethylallyl)adenosine (i(6)A), leading to the formation of 2-methylthio-N6-(dimethylallyl)adenosine (ms(2)i(6)A) at position 37 in tRNAs that read codons beginning with uridine. In Rickettsia typhi (strain ATCC VR-144 / Wilmington), this protein is tRNA-2-methylthio-N(6)-dimethylallyladenosine synthase.